Here is a 1188-residue protein sequence, read N- to C-terminus: DNA-directed RNA polymerase subunit beta (1188 aa).

It belongs to the RNA polymerase beta chain family. The RNAP catalytic core consists of 2 alpha, 1 beta, 1 beta' and 1 omega subunit. When a sigma factor is associated with the core the holoenzyme is formed, which can initiate transcription.

The enzyme catalyses RNA(n) + a ribonucleoside 5'-triphosphate = RNA(n+1) + diphosphate. DNA-dependent RNA polymerase catalyzes the transcription of DNA into RNA using the four ribonucleoside triphosphates as substrates. This chain is DNA-directed RNA polymerase subunit beta, found in Streptococcus pyogenes serotype M1.